The sequence spans 36 residues: Potassium channel toxin alpha-KTx 16.1 (36 aa).

3 disulfides stabilise this stretch: Cys-7-Cys-28, Cys-13-Cys-33, and Cys-17-Cys-35.

This sequence belongs to the short scorpion toxin superfamily. Potassium channel inhibitor family. Alpha-KTx 16 subfamily. In terms of tissue distribution, expressed by the venom gland.

The protein localises to the secreted. Its function is as follows. Blocks calcium-activated potassium channels. This is Potassium channel toxin alpha-KTx 16.1 from Hottentotta tamulus (Eastern Indian scorpion).